A 291-amino-acid polypeptide reads, in one-letter code: 3-hydroxy-5-phosphonooxypentane-2,4-dione thiolase (291 aa).

Catalysis depends on Lys-203, which acts as the Schiff-base intermediate with substrate.

The protein belongs to the DeoC/FbaB aldolase family. As to quaternary structure, homodecamer.

The protein resides in the cytoplasm. The catalysed reaction is dihydroxyacetone phosphate + acetyl-CoA = 3-hydroxy-2,4-dioxopentyl phosphate + CoA. Functionally, involved in the degradation of phospho-AI-2, thereby terminating induction of the lsr operon and closing the AI-2 signaling cycle. Catalyzes the transfer of an acetyl moiety from 3-hydroxy-5-phosphonooxypentane-2,4-dione to CoA to form glycerone phosphate and acetyl-CoA. This chain is 3-hydroxy-5-phosphonooxypentane-2,4-dione thiolase, found in Escherichia coli O139:H28 (strain E24377A / ETEC).